The sequence spans 405 residues: Replication factor C large subunit (405 aa).

47–54 lines the ATP pocket; that stretch reads GPPGVGKT.

Belongs to the activator 1 small subunits family. RfcL subfamily. As to quaternary structure, heteromultimer composed of small subunits (RfcS) and large subunits (RfcL).

Part of the RFC clamp loader complex which loads the PCNA sliding clamp onto DNA. This Saccharolobus islandicus (strain L.S.2.15 / Lassen #1) (Sulfolobus islandicus) protein is Replication factor C large subunit.